The following is a 400-amino-acid chain: WW domain-containing transcription regulator protein 1 (400 aa).

Residue Lys46 forms a Glycyl lysine isopeptide (Lys-Gly) (interchain with G-Cter in ubiquitin) linkage. Residues 52–117 (FFKEPDSGSH…QQHAHLRQQS (66 aa)) form a disordered region. The segment covering 61–70 (HSRQSSTDSS) has biased composition (polar residues). 2 positions are modified to phosphoserine: Ser62 and Ser89. Residues 91–110 (PASLQLGPGAGAAGSPAQQH) show a composition bias toward low complexity. The WW domain occupies 124-157 (LPLPPGWEMTFTATGQRYFLNHIEKITTWQDPRK). Over residues 192-211 (NHQHQQQMAPTNLSQQNHPT) the composition is skewed to polar residues. The segment at 192 to 216 (NHQHQQQMAPTNLSQQNHPTQNPPA) is disordered. The required for interaction with PALS1 stretch occupies residues 222–400 (PNALTTQQQQ…NKSEPFLTWL (179 aa)). Phosphoserine occurs at positions 295 and 311. The PDZ-binding motif lies at 394-400 (EPFLTWL).

In terms of assembly, binds to SLC9A3R2 via the PDZ motif at the plasma membrane. Binds to YWHAZ in vivo and in vitro through the phosphoserine-binding motif RSHSSP. Interacts (via coiled-coil domain) with SMAD2 (via MH1 domain), SMAD3 and SMAD4. Interacts with MED15. Interacts with PAX8 and NKX2-1. Interacts with TEAD1, TEAD2, TEAD3 and TEAD4. Interacts (via WW domain) with PALS1. Interacts with LATS1. Interacts with YAP1 (when phosphorylated at 'Ser-112'). Interacts (via WW domain) with PRRG4 (via cytoplasmic domain). Interacts (via WW domain) with AMOTL2 (via PPXY motif); the interaction promotes WWTR1/TAZ localization to the cytoplasm and tight junctions, thereby inhibiting its transcriptional coactivator properties. Interacts (via WW domain) with AMOT; the interaction facilitates translocation of WWTR1/TAZ to the cytoplasm. Phosphorylated by LATS2 and STK3/MST2. Phosphorylation by LATS2 results in creation of 14-3-3 binding sites, retention in the cytoplasm, and functional inactivation. Phosphorylation results in the inhibition of transcriptional coactivation through YWHAZ-mediated nuclear export. Post-translationally, ubiquitinated at Lys-46; leading to proteasomal degradation. Deubiquitinated and stabilized by UCHL1 at Lys-46; leading to inhibition of osteoclastogenesis.

The protein localises to the cytoplasm. Its subcellular location is the nucleus. It is found in the cell membrane. It localises to the cell junction. The protein resides in the tight junction. Transcriptional coactivator which acts as a downstream regulatory target in the Hippo signaling pathway that plays a pivotal role in organ size control and tumor suppression by restricting proliferation and promoting apoptosis. The core of this pathway is composed of a kinase cascade wherein STK3/MST2 and STK4/MST1, in complex with its regulatory protein SAV1, phosphorylates and activates LATS1/2 in complex with its regulatory protein MOB1, which in turn phosphorylates and inactivates YAP1 oncoprotein and WWTR1/TAZ. WWTR1 enhances PAX8 and NKX2-1/TTF1-dependent gene activation. In conjunction with YAP1, involved in the regulation of TGFB1-dependent SMAD2 and SMAD3 nuclear accumulation. Plays a key role in coupling SMADs to the transcriptional machinery such as the mediator complex. Regulates embryonic stem-cell self-renewal, promotes cell proliferation and epithelial-mesenchymal transition. The chain is WW domain-containing transcription regulator protein 1 from Canis lupus familiaris (Dog).